The sequence spans 792 residues: Endonuclease MutS2 (792 aa).

344–351 (GPNTGGKT) is an ATP binding site. In terms of domain architecture, Smr spans 716–791 (IHLRGLHVEE…GLGVTVVYLE (76 aa)).

The protein belongs to the DNA mismatch repair MutS family. MutS2 subfamily. Homodimer. Binds to stalled ribosomes, contacting rRNA.

In terms of biological role, endonuclease that is involved in the suppression of homologous recombination and thus may have a key role in the control of bacterial genetic diversity. Acts as a ribosome collision sensor, splitting the ribosome into its 2 subunits. Detects stalled/collided 70S ribosomes which it binds and splits by an ATP-hydrolysis driven conformational change. Acts upstream of the ribosome quality control system (RQC), a ribosome-associated complex that mediates the extraction of incompletely synthesized nascent chains from stalled ribosomes and their subsequent degradation. Probably generates substrates for RQC. The chain is Endonuclease MutS2 from Thermomicrobium roseum (strain ATCC 27502 / DSM 5159 / P-2).